The chain runs to 454 residues: Tetrahydroanabasine acetyltransferase (454 aa).

Active-site proton acceptor residues include H164 and D389.

It belongs to the plant acyltransferase family. As to quaternary structure, monomer.

It catalyses the reaction tetrahydroanabasine + acetyl-CoA = ammodendrine + CoA. The protein operates within alkaloid biosynthesis. Functionally, tetrahydroanabasine acetyltransferase involved in the accumulation of quinolizidine type antinutritional alkaloids (QAs) natural products. QAs impart a bitter taste to plants, acting as repellents and toxicants for herbivores and predators, and possess a variety of pharmacological effects, including sedative, anticonvulsant, anti-inflammatory, antiviral, antitumor, antipyretic, anti-hepatitis B, antifibrotic, antiallergic, antidiarrheal, analgesic and antimicrobial activities. Mediates the conversion of tetrahydroanabasine into ammodendrine. The sequence is that of Tetrahydroanabasine acetyltransferase from Lupinus albus (White lupine).